The sequence spans 130 residues: Small ribosomal subunit protein uS9 (130 aa).

The segment at 108 to 130 (SREVERKKVGLRKARKRPQYSKR) is disordered. The span at 116 to 130 (VGLRKARKRPQYSKR) shows a compositional bias: basic residues.

It belongs to the universal ribosomal protein uS9 family.

The chain is Small ribosomal subunit protein uS9 from Cellvibrio japonicus (strain Ueda107) (Pseudomonas fluorescens subsp. cellulosa).